The following is a 366-amino-acid chain: Putative type II methyltransferase M.MjaORF1200P (366 aa).

The region spanning 5 to 366 (LKFIDLFCGC…IARVIKENLK (362 aa)) is the SAM-dependent MTase C5-type domain. The active site involves Cys133.

The protein belongs to the class I-like SAM-binding methyltransferase superfamily. C5-methyltransferase family.

The enzyme catalyses a 2'-deoxycytidine in DNA + S-adenosyl-L-methionine = a 5-methyl-2'-deoxycytidine in DNA + S-adenosyl-L-homocysteine + H(+). Its function is as follows. A putative methylase that probably protects DNA from cleavage by the MjaORF1200P endonuclease. This Methanocaldococcus jannaschii (strain ATCC 43067 / DSM 2661 / JAL-1 / JCM 10045 / NBRC 100440) (Methanococcus jannaschii) protein is Putative type II methyltransferase M.MjaORF1200P.